Reading from the N-terminus, the 111-residue chain is MPPLSESEFLALATQELDRIEATVEAAADAADADIEISRTGNVMELEFENGTKIIINSQAPMQELWVAARAGGFHFRRDGERWIDTRNGGELYAALSGYVSEQAGAALTLG.

The protein belongs to the frataxin family.

In terms of biological role, involved in iron-sulfur (Fe-S) cluster assembly. May act as a regulator of Fe-S biogenesis. This chain is Iron-sulfur cluster assembly protein CyaY, found in Cupriavidus necator (strain ATCC 17699 / DSM 428 / KCTC 22496 / NCIMB 10442 / H16 / Stanier 337) (Ralstonia eutropha).